Consider the following 960-residue polypeptide: Glycine dehydrogenase (decarboxylating) (960 aa).

K709 carries the N6-(pyridoxal phosphate)lysine modification.

It belongs to the GcvP family. In terms of assembly, the glycine cleavage system is composed of four proteins: P, T, L and H. Requires pyridoxal 5'-phosphate as cofactor.

It carries out the reaction N(6)-[(R)-lipoyl]-L-lysyl-[glycine-cleavage complex H protein] + glycine + H(+) = N(6)-[(R)-S(8)-aminomethyldihydrolipoyl]-L-lysyl-[glycine-cleavage complex H protein] + CO2. The glycine cleavage system catalyzes the degradation of glycine. The P protein binds the alpha-amino group of glycine through its pyridoxal phosphate cofactor; CO(2) is released and the remaining methylamine moiety is then transferred to the lipoamide cofactor of the H protein. The chain is Glycine dehydrogenase (decarboxylating) from Hahella chejuensis (strain KCTC 2396).